The primary structure comprises 613 residues: Zinc finger protein 665 (613 aa).

18 consecutive C2H2-type zinc fingers follow at residues 113–135 (YKCD…KRIH), 141–163 (YRCN…QVIH), 169–191 (YKCN…QRIH), 197–219 (YKCN…QVIH), 225–247 (YKCN…RRIH), 253–275 (YKCN…QTIH), 281–303 (YKCN…RRVH), 309–331 (YKCN…QIIH), 337–359 (FKCN…RRIH), 365–387 (YRCD…QAIH), 393–415 (YKCN…RGIH), 421–443 (YKCD…WRVH), 449–471 (YKCN…QTIH), 477–499 (YKCN…QRIH), 505–527 (YKCN…QVIH), 533–555 (YKCN…RRIH), 561–583 (YRCN…MAIH), and 589–611 (YKCN…RRIH).

Belongs to the krueppel C2H2-type zinc-finger protein family.

It is found in the nucleus. Functionally, may be involved in transcriptional regulation. This chain is Zinc finger protein 665 (ZNF665), found in Pongo abelii (Sumatran orangutan).